The primary structure comprises 293 residues: MAQSTQHNDDALRVSVLSEALPYIQSFAGRRIVIKYGGAAMAHAELRSAVFRDLALLACVGVRPVVVHGGGPEINQWLQRLEIPAEFRDGLRVTDADTMDVVEMVLVGRVNKQIVNGLNQLGTRAVGLSGSDGSLVEARPWGNGSHGLVGDVARVNPDVLEPLLEKGYVPVISSVAATPDDGRAHNINADTVAGELAAALEAEKLILLTDTPGILEDRDDPDSLIRKLRLSEARQLIEDGVVAGGMTPKTECCIRALAQGVSAAHIIDGRVPHALLLEVFTDAGIGTMVVGRS.

Substrate-binding positions include 70-71 (GG), arginine 92, and asparagine 186.

This sequence belongs to the acetylglutamate kinase family. ArgB subfamily.

It localises to the cytoplasm. It catalyses the reaction N-acetyl-L-glutamate + ATP = N-acetyl-L-glutamyl 5-phosphate + ADP. The protein operates within amino-acid biosynthesis; L-arginine biosynthesis; N(2)-acetyl-L-ornithine from L-glutamate: step 2/4. Catalyzes the ATP-dependent phosphorylation of N-acetyl-L-glutamate. In Synechococcus sp. (strain CC9605), this protein is Acetylglutamate kinase.